The primary structure comprises 78 residues: Acyl carrier protein (78 aa).

The Carrier domain occupies 4 to 78; sequence AQIKEKVYDI…QQAIDYIVKK (75 aa). At serine 39 the chain carries O-(pantetheine 4'-phosphoryl)serine.

This sequence belongs to the acyl carrier protein (ACP) family. Post-translationally, 4'-phosphopantetheine is transferred from CoA to a specific serine of apo-ACP by AcpS. This modification is essential for activity because fatty acids are bound in thioester linkage to the sulfhydryl of the prosthetic group.

The protein resides in the cytoplasm. It participates in lipid metabolism; fatty acid biosynthesis. Its function is as follows. Carrier of the growing fatty acid chain in fatty acid biosynthesis. The protein is Acyl carrier protein of Chlorobium phaeobacteroides (strain DSM 266 / SMG 266 / 2430).